A 178-amino-acid polypeptide reads, in one-letter code: Bifunctional protein PyrR (178 aa).

The PRPP-binding signature appears at 97–109 (VVLVDDVLYTGRT).

This sequence belongs to the purine/pyrimidine phosphoribosyltransferase family. PyrR subfamily.

It catalyses the reaction UMP + diphosphate = 5-phospho-alpha-D-ribose 1-diphosphate + uracil. Its function is as follows. Regulates the transcription of the pyrimidine nucleotide (pyr) operon in response to exogenous pyrimidines. In terms of biological role, also displays a weak uracil phosphoribosyltransferase activity which is not physiologically significant. In Herpetosiphon aurantiacus (strain ATCC 23779 / DSM 785 / 114-95), this protein is Bifunctional protein PyrR.